A 145-amino-acid polypeptide reads, in one-letter code: RING-H2 finger protein ATL18 (145 aa).

Positions 1–29 are cleaved as a signal peptide; sequence MISMLFPRSPLCTAAIVFYTCVCIPLGRL. The segment at 62 to 105 adopts an RING-type; atypical zinc-finger fold; sequence CPICLVEFEAEDAVTHLPRCAHLFHINCIEPWLLRGHLTCPLCR. The helical transmembrane segment at 125–145 threads the bilayer; sequence STLYLSIFFFFCIFLHLLGYL.

Belongs to the RING-type zinc finger family. ATL subfamily.

The protein resides in the membrane. It catalyses the reaction S-ubiquitinyl-[E2 ubiquitin-conjugating enzyme]-L-cysteine + [acceptor protein]-L-lysine = [E2 ubiquitin-conjugating enzyme]-L-cysteine + N(6)-ubiquitinyl-[acceptor protein]-L-lysine.. The protein operates within protein modification; protein ubiquitination. The chain is RING-H2 finger protein ATL18 (ATL18) from Arabidopsis thaliana (Mouse-ear cress).